Here is a 363-residue protein sequence, read N- to C-terminus: UDP-N-acetylglucosamine--N-acetylmuramyl-(pentapeptide) pyrophosphoryl-undecaprenol N-acetylglucosamine transferase (363 aa).

UDP-N-acetyl-alpha-D-glucosamine is bound by residues 14-16 (TGG), Arg171, Ser200, and Gln290.

The protein belongs to the glycosyltransferase 28 family. MurG subfamily.

It localises to the cell inner membrane. The enzyme catalyses di-trans,octa-cis-undecaprenyl diphospho-N-acetyl-alpha-D-muramoyl-L-alanyl-D-glutamyl-meso-2,6-diaminopimeloyl-D-alanyl-D-alanine + UDP-N-acetyl-alpha-D-glucosamine = di-trans,octa-cis-undecaprenyl diphospho-[N-acetyl-alpha-D-glucosaminyl-(1-&gt;4)]-N-acetyl-alpha-D-muramoyl-L-alanyl-D-glutamyl-meso-2,6-diaminopimeloyl-D-alanyl-D-alanine + UDP + H(+). Its pathway is cell wall biogenesis; peptidoglycan biosynthesis. In terms of biological role, cell wall formation. Catalyzes the transfer of a GlcNAc subunit on undecaprenyl-pyrophosphoryl-MurNAc-pentapeptide (lipid intermediate I) to form undecaprenyl-pyrophosphoryl-MurNAc-(pentapeptide)GlcNAc (lipid intermediate II). This Borrelia garinii subsp. bavariensis (strain ATCC BAA-2496 / DSM 23469 / PBi) (Borreliella bavariensis) protein is UDP-N-acetylglucosamine--N-acetylmuramyl-(pentapeptide) pyrophosphoryl-undecaprenol N-acetylglucosamine transferase.